Here is a 143-residue protein sequence, read N- to C-terminus: Large ribosomal subunit protein eL28y (143 aa).

Belongs to the eukaryotic ribosomal protein eL28 family.

The protein is Large ribosomal subunit protein eL28y (RPL28C) of Arabidopsis thaliana (Mouse-ear cress).